The sequence spans 395 residues: Synaptotagmin-8 (395 aa).

At 1-44 the chain is on the extracellular side; the sequence is MQADRSMKMGHVSNPLSTSAPVDATAGPNLIPDLITKIPWPRWI. The chain crosses the membrane as a helical; Signal-anchor for type III membrane protein span at residues 45 to 65; sequence LFIAILAAGVLLVSCLLCVIC. Over 66–395 the chain is Cytoplasmic; it reads YCCHRQRHRK…PRLPLLRPRS (330 aa). C2 domains are found at residues 113–229 and 241–370; these read PWGQ…ESWY and QMGE…AQWH.

It belongs to the synaptotagmin family. As to quaternary structure, homodimer or homooligomer. Homodimerization and homooligomerization do not depend on Ca(2+). Interacts with SYNCRIP isoform 2 C-terminus. Binds inositol 1,3,4,5-tetrakisphosphate (IP4). Binds to AP2 in a Ca(2+)-independent manner. Interacts with STX1A, STX1B and STX2; the interaction is Ca(2+)-dependent. Ubiquitous. Strongly expressed in heart, kidney, cerebral cortex, pancreas, and many insulin-secreting cells; lower expression in spleen. Broadly distributed in kidney.

The protein resides in the cell membrane. Its subcellular location is the cytoplasmic vesicle. It is found in the secretory vesicle. It localises to the acrosome. In terms of biological role, involved in the trafficking and exocytosis of secretory vesicles in non-neuronal tissues. Mediates Ca(2+)-regulation of exocytosis acrosomal reaction in sperm. May mediate Ca(2+)-regulation of exocytosis in insulin secreted cells. The polypeptide is Synaptotagmin-8 (Syt8) (Rattus norvegicus (Rat)).